Consider the following 167-residue polypeptide: uncharacterized protein (167 aa).

The protein localises to the mitochondrion. This is an uncharacterized protein from Ascobolus immersus.